Reading from the N-terminus, the 251-residue chain is 5'-nucleotidase SurE (251 aa).

The a divalent metal cation site is built by Asp8, Asp9, Ser40, and Asn95.

It belongs to the SurE nucleotidase family. A divalent metal cation serves as cofactor.

It localises to the cytoplasm. The enzyme catalyses a ribonucleoside 5'-phosphate + H2O = a ribonucleoside + phosphate. Functionally, nucleotidase that shows phosphatase activity on nucleoside 5'-monophosphates. This Desulfitobacterium hafniense (strain DSM 10664 / DCB-2) protein is 5'-nucleotidase SurE.